Here is a 360-residue protein sequence, read N- to C-terminus: Phospho-N-acetylmuramoyl-pentapeptide-transferase (360 aa).

Transmembrane regions (helical) follow at residues 24–44 (RAVMAALTALAFSLMFGPWTI), 69–89 (GTPTMGGSLILTAITVSTLLW), 92–112 (WANPYIWILLGVLLATGALGF), 133–153 (MVWQSSVAIIAGLALFYLAAN), 158–178 (ILIVPFFKQIALPLGVVGFLV), 199–219 (GLATFPVVLVAAGLAIFAYVS), 239–259 (VAIFCTAMCGACLGFLWFNAY), 263–283 (VFMGDVGALALGAALGTVAVI), 288–308 (FVLVIMGGLFVVEAVSVMLQV), and 337–357 (QVVVRFWIITIVLVLIGLSTL).

Belongs to the glycosyltransferase 4 family. MraY subfamily. It depends on Mg(2+) as a cofactor.

It is found in the cell inner membrane. The enzyme catalyses UDP-N-acetyl-alpha-D-muramoyl-L-alanyl-gamma-D-glutamyl-meso-2,6-diaminopimeloyl-D-alanyl-D-alanine + di-trans,octa-cis-undecaprenyl phosphate = di-trans,octa-cis-undecaprenyl diphospho-N-acetyl-alpha-D-muramoyl-L-alanyl-D-glutamyl-meso-2,6-diaminopimeloyl-D-alanyl-D-alanine + UMP. The protein operates within cell wall biogenesis; peptidoglycan biosynthesis. Its function is as follows. Catalyzes the initial step of the lipid cycle reactions in the biosynthesis of the cell wall peptidoglycan: transfers peptidoglycan precursor phospho-MurNAc-pentapeptide from UDP-MurNAc-pentapeptide onto the lipid carrier undecaprenyl phosphate, yielding undecaprenyl-pyrophosphoryl-MurNAc-pentapeptide, known as lipid I. This chain is Phospho-N-acetylmuramoyl-pentapeptide-transferase, found in Neisseria meningitidis serogroup C (strain 053442).